Here is a 178-residue protein sequence, read N- to C-terminus: ATP synthase subunit delta (178 aa).

It belongs to the ATPase delta chain family. In terms of assembly, F-type ATPases have 2 components, F(1) - the catalytic core - and F(0) - the membrane proton channel. F(1) has five subunits: alpha(3), beta(3), gamma(1), delta(1), epsilon(1). F(0) has three main subunits: a(1), b(2) and c(10-14). The alpha and beta chains form an alternating ring which encloses part of the gamma chain. F(1) is attached to F(0) by a central stalk formed by the gamma and epsilon chains, while a peripheral stalk is formed by the delta and b chains.

The protein resides in the cell inner membrane. Its function is as follows. F(1)F(0) ATP synthase produces ATP from ADP in the presence of a proton or sodium gradient. F-type ATPases consist of two structural domains, F(1) containing the extramembraneous catalytic core and F(0) containing the membrane proton channel, linked together by a central stalk and a peripheral stalk. During catalysis, ATP synthesis in the catalytic domain of F(1) is coupled via a rotary mechanism of the central stalk subunits to proton translocation. This protein is part of the stalk that links CF(0) to CF(1). It either transmits conformational changes from CF(0) to CF(1) or is implicated in proton conduction. This chain is ATP synthase subunit delta, found in Teredinibacter turnerae (strain ATCC 39867 / T7901).